The chain runs to 523 residues: MNRLCDSMEPKVMDDDMLKLAVGEQGPQEEAGQLAKQEGILFKDVLSLQLDFRNILRIDNLWQFENLRKLQLDNNIIEKIGGLENLTHLVWLDLSFNNIETIEGLDTLVNLEDLSLFNNRISKIDSLDALVKLQVLSLGNNQIDNMMNIVYLRRFQCLRTLSLSGNPISEAEDYKMFICAYLPDLVYLDFRRIDDHTKELAEAKHQYSIDELKHRENLMQVRLQDERARQEELEKHKTAFVEHLNGSFLFDSMYAEDSEGNKLSYLPGVSELLEAYKDKFVIICMNIFEYGLKQQEKRKIELDTFSECVHEAIQENQEQGKRKIAQFEEKHLSSLSAIREESELPNIEKMILECSADVSELFNELMMLEMQLVEQLEETINMFERNIVDMVGLFIENVQSLMAQCRDLENHHHEKLLEISISTLEKIVKGDLDEDLPDDLRALFVDKDTIVNAVGASHDIHLLKIDNREDELVTRINSWCTRLVDKIHKDEIMRNRKRVKEINQYIDHMQSELDNLEYSDILD.

LRR repeat units lie at residues 44–65, 66–87, 88–109, 110–131, and 132–153; these read DVLS…WQFE, NLRK…ENLT, HLVW…DTLV, NLED…DALV, and KLQV…VYLR. Positions 166 to 206 constitute an LRRCT domain; it reads NPISEAEDYKMFICAYLPDLVYLDFRRIDDHTKELAEAKHQ. Residues 358–391 adopt a coiled-coil conformation; that stretch reads VSELFNELMMLEMQLVEQLEETINMFERNIVDMV.

It belongs to the DRC3 family. As to quaternary structure, component of the nexin-dynein regulatory complex (N-DRC). Interacts with DRC1. Interacts with TCTE1/DRC5. Interacts with DRC7.

The protein localises to the cytoplasm. The protein resides in the cytoskeleton. Its subcellular location is the cilium axoneme. It localises to the cell projection. It is found in the cilium. The protein localises to the flagellum axoneme. The protein resides in the flagellum. In terms of biological role, component of the nexin-dynein regulatory complex (N-DRC) a key regulator of ciliary/flagellar motility which maintains the alignment and integrity of the distal axoneme and regulates microtubule sliding in motile axonemes. This chain is Dynein regulatory complex subunit 3 (DRC3), found in Macaca fascicularis (Crab-eating macaque).